The sequence spans 172 residues: Translation initiation factor IF-3 (172 aa).

This sequence belongs to the IF-3 family. Monomer.

The protein resides in the cytoplasm. Functionally, IF-3 binds to the 30S ribosomal subunit and shifts the equilibrium between 70S ribosomes and their 50S and 30S subunits in favor of the free subunits, thus enhancing the availability of 30S subunits on which protein synthesis initiation begins. The protein is Translation initiation factor IF-3 of Sulfurimonas denitrificans (strain ATCC 33889 / DSM 1251) (Thiomicrospira denitrificans (strain ATCC 33889 / DSM 1251)).